The following is a 274-amino-acid chain: 2,3,4,5-tetrahydropyridine-2,6-dicarboxylate N-succinyltransferase (274 aa).

Substrate contacts are provided by arginine 104 and aspartate 141.

This sequence belongs to the transferase hexapeptide repeat family. As to quaternary structure, homotrimer.

The protein localises to the cytoplasm. The enzyme catalyses (S)-2,3,4,5-tetrahydrodipicolinate + succinyl-CoA + H2O = (S)-2-succinylamino-6-oxoheptanedioate + CoA. The protein operates within amino-acid biosynthesis; L-lysine biosynthesis via DAP pathway; LL-2,6-diaminopimelate from (S)-tetrahydrodipicolinate (succinylase route): step 1/3. In Shewanella sp. (strain ANA-3), this protein is 2,3,4,5-tetrahydropyridine-2,6-dicarboxylate N-succinyltransferase.